Consider the following 327-residue polypeptide: Phenylalanine--tRNA ligase alpha subunit (327 aa).

Glu252 serves as a coordination point for Mg(2+).

Belongs to the class-II aminoacyl-tRNA synthetase family. Phe-tRNA synthetase alpha subunit type 1 subfamily. Tetramer of two alpha and two beta subunits. Mg(2+) serves as cofactor.

The protein resides in the cytoplasm. It catalyses the reaction tRNA(Phe) + L-phenylalanine + ATP = L-phenylalanyl-tRNA(Phe) + AMP + diphosphate + H(+). The chain is Phenylalanine--tRNA ligase alpha subunit from Escherichia coli O127:H6 (strain E2348/69 / EPEC).